We begin with the raw amino-acid sequence, 947 residues long: Pyruvate, phosphate dikinase 1, chloroplastic (947 aa).

The N-terminal 71 residues, M1–P71, are a transit peptide targeting the chloroplast. Residues R39–C60 are disordered. At T527 the chain carries Phosphothreonine; by PDRP1. The Tele-phosphohistidine intermediate role is filled by H529. Positions 635, 692, 821, 842, 843, 844, and 845 each coordinate substrate. E821 is a binding site for Mg(2+). D845 lines the Mg(2+) pocket. C907 (proton donor) is an active-site residue.

This sequence belongs to the PEP-utilizing enzyme family. Homotetramer. Requires Mg(2+) as cofactor. Post-translationally, phosphorylation of Thr-527 in the dark inactivates the enzyme. Dephosphorylation upon light stimulation reactivates the enzyme. Phosphorylation increases during the first 20 days post-pollination and then remains constant through the 40-day mature seed stage. Reactivation by dephosphorylation during germination is negligible. Isoform 1 is only expressed in green leaves. Isoform 2 is found in roots, stems, rachis branches, leaf sheaths, green leaves and spikelets. The non-phosphorylated PPDK in mature seeds is endosperm-localized.

The protein resides in the plastid. Its subcellular location is the chloroplast. The protein localises to the cytoplasm. The enzyme catalyses pyruvate + phosphate + ATP = phosphoenolpyruvate + AMP + diphosphate + H(+). With respect to regulation, activated by light-induced dephosphorylation. Inhibited by dark-induced phosphorylation. Both reactions are catalyzed by PDRP1. In terms of biological role, formation of phosphoenolpyruvate. The cytoplasmic isoform supports the biosynthetic processes in the nascent endosperm and provides an efficient mechanism for glycolytic ATP synthesis in oxygen depleted tissues. May be involved in regulating the flux of carbon into starch and fatty acids of seeds and in the remobilization of nitrogen reserves in senescing leaves. In Oryza sativa subsp. japonica (Rice), this protein is Pyruvate, phosphate dikinase 1, chloroplastic (PPDK1).